Consider the following 901-residue polypeptide: Glutamate receptor 2.1 (901 aa).

The first 25 residues, 1 to 25 (MKRENNLVLSLLFFVIVFLMQVGEA), serve as a signal peptide directing secretion. At 26–574 (QNRITNVNVG…SSTIFLMPLT (549 aa)) the chain is on the extracellular side. Residues asparagine 46, asparagine 53, asparagine 204, asparagine 267, asparagine 331, asparagine 342, asparagine 461, asparagine 477, and asparagine 536 are each glycosylated (N-linked (GlcNAc...) asparagine). The chain crosses the membrane as a helical span at residues 575–595 (LALWLISLLSFFIIGLVVWVL). Topologically, residues 596–604 (EHRVNPDFD) are cytoplasmic. A helical membrane pass occupies residues 605 to 625 (GPGQYQLSTIFWFSFSIMVFA). Residues 626-629 (PRER) lie on the Cytoplasmic side of the membrane. The helical transmembrane segment at 630 to 650 (VLSFWARVVVIIWYFLVLVLT) threads the bilayer. Residues 651–823 (QSYTASLASL…VSFRQLGFDS (173 aa)) lie on the Extracellular side of the membrane. Residues 824–844 (FWVLFLVAAIVCTMALLKFVY) form a helical membrane-spanning segment. Residues 845–901 (QFLKENPNQRNLRVLWEKFNEPDQKSYIKDVTKCQCSSGQGMPKNGQEGANAVNNGN) lie on the Cytoplasmic side of the membrane.

This sequence belongs to the glutamate-gated ion channel (TC 1.A.10.1) family. As to quaternary structure, may form heteromers. Expressed predominantly in roots. First strongly detected in all cell types of the root except at the apex. Later expressed at the root-shoot junction.

The protein resides in the membrane. Glutamate-gated receptor that probably acts as a non-selective cation channel. May be involved in light-signal transduction and calcium homeostasis via the regulation of calcium influx into cells. The chain is Glutamate receptor 2.1 (GLR2.1) from Arabidopsis thaliana (Mouse-ear cress).